The sequence spans 483 residues: Salicylaldehyde dehydrogenase (483 aa).

Position 228–233 (228–233) interacts with NAD(+); sequence GSTRVG. Catalysis depends on residues glutamate 250 and cysteine 284.

This sequence belongs to the aldehyde dehydrogenase family.

The enzyme catalyses salicylaldehyde + NAD(+) + H2O = salicylate + NADH + 2 H(+). The protein operates within aromatic compound metabolism; naphthalene degradation. The polypeptide is Salicylaldehyde dehydrogenase (nahF) (Pseudomonas putida (Arthrobacter siderocapsulatus)).